A 731-amino-acid polypeptide reads, in one-letter code: Endopolyphosphatase (731 aa).

The Cytoplasmic segment spans residues 1–4; sequence MSLS. The chain crosses the membrane as a helical; Signal-anchor for type II membrane protein span at residues 5-25; that stretch reads RCILGLACLWHGVIASPLGAV. The Vacuolar segment spans residues 26-731; it reads PSNIPIATDL…VEKEDLKKFT (706 aa). The N-linked (GlcNAc...) asparagine glycan is linked to N106. The segment at 375–403 is disordered; it reads KLQPPPTDSKNSGQLKKGKKGRKGKKKKP. Basic residues predominate over residues 390–402; it reads KKGKKGRKGKKKK. N433 carries N-linked (GlcNAc...) asparagine glycosylation. A disordered region spans residues 456–522; the sequence is EQNDRQKHLD…PPGPAYSPQP (67 aa). Basic and acidic residues-rich tracts occupy residues 457–474 and 492–501; these read QNDR…PSHM and GGDSKPKKPD. Pro residues predominate over residues 505–519; it reads PHPPAKSSPPGPAYS. N534 and N540 each carry an N-linked (GlcNAc...) asparagine glycan. The interval 626–706 is disordered; it reads AKSIDVSYES…HKKKKGKKRQ (81 aa). The span at 636–686 shows a compositional bias: acidic residues; that stretch reads AAEEEEEEEEEEEEDLFEEVEETDEEEEQEDDDLSDGEEVDDDSDEDELET. A compositionally biased stretch (basic residues) spans 691–706; it reads KHDKKKHKKKKGKKRQ.

Belongs to the endopolyphosphatase PPN1 family. A divalent metal cation is required as a cofactor. Post-translationally, processing by proteases in the vacuole may be required for activation.

The protein resides in the vacuole membrane. The catalysed reaction is [phosphate](n+1) + n H2O = (n+1) phosphate + n H(+). Catalyzes the hydrolysis of inorganic polyphosphate (polyP) chains of many hundreds of phosphate residues into shorter lengths. This Neurospora crassa (strain ATCC 24698 / 74-OR23-1A / CBS 708.71 / DSM 1257 / FGSC 987) protein is Endopolyphosphatase (epp-1).